The chain runs to 275 residues: Polyamine aminopropyltransferase (275 aa).

The region spanning 2 to 235 (ELWFTEKQTK…GLWTFTIGSK (234 aa)) is the PABS domain. Q31 lines the S-methyl-5'-thioadenosine pocket. H62 and D86 together coordinate spermidine. S-methyl-5'-thioadenosine-binding positions include E106 and 137 to 138 (DG). D155 acts as the Proton acceptor in catalysis. 155-158 (DSTE) contacts spermidine. Residue P162 participates in S-methyl-5'-thioadenosine binding.

It belongs to the spermidine/spermine synthase family. As to quaternary structure, homodimer or homotetramer.

Its subcellular location is the cytoplasm. It catalyses the reaction S-adenosyl 3-(methylsulfanyl)propylamine + putrescine = S-methyl-5'-thioadenosine + spermidine + H(+). It functions in the pathway amine and polyamine biosynthesis; spermidine biosynthesis; spermidine from putrescine: step 1/1. Functionally, catalyzes the irreversible transfer of a propylamine group from the amino donor S-adenosylmethioninamine (decarboxy-AdoMet) to putrescine (1,4-diaminobutane) to yield spermidine. This is Polyamine aminopropyltransferase from Bacillus cytotoxicus (strain DSM 22905 / CIP 110041 / 391-98 / NVH 391-98).